Reading from the N-terminus, the 517-residue chain is Nucleoside transporter FUN26 (517 aa).

Residues 1–63 form a disordered region; the sequence is MSTSADTDTI…EREQSVSTEP (63 aa). Basic and acidic residues predominate over residues 25 to 44; sequence THSEEISRSGEEHESENNEH. Residues Ser45 and Ser58 each carry the phosphoserine modification. 11 helical membrane passes run 76–96, 116–136, 151–171, 174–194, 214–234, 243–263, 344–364, 367–387, 411–431, 446–466, and 492–512; these read LSYI…NCIL, IFTS…NIYL, LVWE…HFLL, WFNF…TAMT, MVGQ…LAFI, GGIL…VVMF, LVLS…FASA, VTGL…LWNL, TFIY…FTAI, IVDL…GHVI, and IFVS…VFII.

It belongs to the SLC29A/ENT transporter (TC 2.A.57) family.

Its subcellular location is the membrane. Has broad nucleoside selectivity (uridine, adenosine and cytidine) and most likely functions to transport nucleosides across intracellular membranes. This chain is Nucleoside transporter FUN26 (FUN26), found in Saccharomyces cerevisiae (strain ATCC 204508 / S288c) (Baker's yeast).